The primary structure comprises 313 residues: Aspartate carbamoyltransferase catalytic subunit (313 aa).

Carbamoyl phosphate-binding residues include arginine 58 and threonine 59. Residue lysine 86 participates in L-aspartate binding. Carbamoyl phosphate-binding residues include arginine 108, histidine 136, and glutamine 139. L-aspartate-binding residues include arginine 169 and arginine 223. 2 residues coordinate carbamoyl phosphate: glycine 264 and proline 265.

The protein belongs to the aspartate/ornithine carbamoyltransferase superfamily. ATCase family. Heterododecamer (2C3:3R2) of six catalytic PyrB chains organized as two trimers (C3), and six regulatory PyrI chains organized as three dimers (R2).

It carries out the reaction carbamoyl phosphate + L-aspartate = N-carbamoyl-L-aspartate + phosphate + H(+). Its pathway is pyrimidine metabolism; UMP biosynthesis via de novo pathway; (S)-dihydroorotate from bicarbonate: step 2/3. In terms of biological role, catalyzes the condensation of carbamoyl phosphate and aspartate to form carbamoyl aspartate and inorganic phosphate, the committed step in the de novo pyrimidine nucleotide biosynthesis pathway. In Syntrophotalea carbinolica (strain DSM 2380 / NBRC 103641 / GraBd1) (Pelobacter carbinolicus), this protein is Aspartate carbamoyltransferase catalytic subunit.